The chain runs to 336 residues: Protein ABHD13 (336 aa).

The chain crosses the membrane as a helical; Signal-anchor for type II membrane protein span at residues 37-57 (FNMYGGVILLLLIFVSIAGIL). Residues Ser-193, Asp-268, and His-298 each act as charge relay system in the active site. Asn-299 carries N-linked (GlcNAc...) asparagine glycosylation.

This sequence belongs to the serine esterase family.

It localises to the membrane. The polypeptide is Protein ABHD13 (Xenopus laevis (African clawed frog)).